Here is a 696-residue protein sequence, read N- to C-terminus: UvrABC system protein C (696 aa).

The GIY-YIG domain maps to 16 to 95 (TEPGVYKFRD…IKRFDPRFNV (80 aa)). Residues 208–243 (DKVTRKLNADMMAAAEELDFERAARLRDDLEAIDKV) enclose the UVR domain.

This sequence belongs to the UvrC family. In terms of assembly, interacts with UvrB in an incision complex.

The protein localises to the cytoplasm. In terms of biological role, the UvrABC repair system catalyzes the recognition and processing of DNA lesions. UvrC both incises the 5' and 3' sides of the lesion. The N-terminal half is responsible for the 3' incision and the C-terminal half is responsible for the 5' incision. The sequence is that of UvrABC system protein C from Corynebacterium glutamicum (strain ATCC 13032 / DSM 20300 / JCM 1318 / BCRC 11384 / CCUG 27702 / LMG 3730 / NBRC 12168 / NCIMB 10025 / NRRL B-2784 / 534).